We begin with the raw amino-acid sequence, 339 residues long: Transcription factor IIIA (339 aa).

C2H2-type zinc fingers lie at residues 13–37, 43–67, 73–98, 105–129, 135–159, 162–188, 192–214, 221–246, and 252–276; these read YICSFADCGASYNKNWKLRAHLCKH, FPCKEEGCDKGFTSLHHLTRHSITH, FKCDSDKCDLTFTTKANMKKHFNRFH, YVCHFEGCDKAFKKHNQLKVHQFTH, YKCPHEGCDKSFSVPSCLKRHEKVH, YPCKKDDSCLFVGKTWTLYLKHVKECH, VMCDECKRTFKHKDYLRNHKKTH, YCCPRDGCERSYTTEFNLQSHMQSFH, and FACEHAECGKSFAMKKSLERHSVVH. 2 stretches are compositionally biased toward basic and acidic residues: residues 275-288 and 305-316; these read VHDPEKRKLKEKCP and KSKEKSAAKATE. Residues 275–339 are disordered; sequence VHDPEKRKLK…ETKGSLVIEK (65 aa).

Synthesized in oocytes and, in much lower levels, in somatic cells.

The protein resides in the nucleus. Functionally, involved in ribosomal large subunit biogenesis. Interacts with the internal control region (ICR) of approximately 50 bases within the 5S RNA genes, is required for correct transcription of these genes by RNA polymerase III. Also binds the transcribed 5S RNA's. The polypeptide is Transcription factor IIIA (gtf3a) (Xenopus borealis (Kenyan clawed frog)).